The chain runs to 385 residues: Circadian-associated transcriptional repressor (385 aa).

The span at 1 to 26 (MDSPSSVSSYSSYSLSSSFPTSPVNS) shows a compositional bias: low complexity. Disordered stretches follow at residues 1-108 (MDSP…SLNT), 203-233 (GGGK…EKMD), and 365-385 (GHRE…LLNL). Over residues 33 to 45 (DSEREDKGAHGPR) the composition is skewed to basic and acidic residues. The segment covering 70 to 79 (VSGNQHTPSH) has biased composition (polar residues).

In terms of assembly, interacts with PER2, CRY2, BHLHE41, HDAC1 and NR3C1. Interacts with BMAL1.

It localises to the nucleus. The protein resides in the PML body. Its function is as follows. Transcriptional repressor which forms a negative regulatory component of the circadian clock and acts independently of the circadian transcriptional repressors: CRY1, CRY2 and BHLHE41. In a histone deacetylase-dependent manner represses the transcriptional activator activity of the CLOCK-BMAL1 heterodimer. Abrogates the interaction of BMAL1 with the transcriptional coactivator CREBBP and can repress the histone acetyl-transferase activity of the CLOCK-BMAL1 heterodimer, reducing histone acetylation of its target genes. Rhythmically binds the E-box elements (5'-CACGTG-3') on circadian gene promoters and its occupancy shows circadian oscillation antiphasic to BMAL1. Interacts with the glucocorticoid receptor (NR3C1) and contributes to the repressive function in the glucocorticoid response. This Homo sapiens (Human) protein is Circadian-associated transcriptional repressor (CIART).